The chain runs to 467 residues: Envelope glycoprotein M (467 aa).

Residues 1–32 (MGRRAPRGSPEAAPGADVAPGARAAWWVWCVQ) lie on the Intravirion side of the membrane. A helical membrane pass occupies residues 33–53 (VATFIVSAICVVGLLVLASVF). At 54–90 (RDRFPCLYAPATSYAKANATVEVRGGVAVPLRLDTQS) the chain is on the virion surface side. Residues 91 to 111 (LLATYAITSTLLLAAAVYAAV) traverse the membrane as a helical segment. Residues 112–137 (GAVTSRYERALDAARRLAAARMAMPH) lie on the Intravirion side of the membrane. A helical transmembrane segment spans residues 138 to 158 (ATLIAGNVCAWLLQITVLLLA). At 159-163 (HRISQ) the chain is on the virion surface side. The helical transmembrane segment at 164–184 (LAHLIYVLHFACLVYLAAHFC) threads the bilayer. Residues 185–220 (TRGVLSGTYLRQVHGLIDPAPTHHRIVGPVRAVMTN) lie on the Intravirion side of the membrane. Residues 221–241 (ALLLGTLLCTAAAAVSLNTIA) traverse the membrane as a helical segment. The Virion surface portion of the chain corresponds to 242–250 (ALNFNFSAP). A helical transmembrane segment spans residues 251-271 (SMLICLTTLFALLVVSLLLVV). At 272-280 (EGVLCHYVR) the chain is on the intravirion side. A helical membrane pass occupies residues 281 to 301 (VLVGPHLGAIAATGIVGLACE). Over 302-318 (HYHTGGYYVVEQQWPGA) the chain is Virion surface. A helical transmembrane segment spans residues 319–339 (QTGVRVALALVAAFALAMAVL). The Intravirion segment spans residues 340 to 467 (RCTRAYLYHR…EPVYSTVRRW (128 aa)). The segment covering 371–381 (RRVRSSMRGSR) has biased composition (basic residues). Disordered regions lie at residues 371–395 (RRVR…AETP) and 432–459 (VQRP…AGEP).

Belongs to the herpesviridae glycoprotein M family. As to quaternary structure, interacts (via N-terminus) with gN (via N-terminus). The gM-gN heterodimer forms the gCII complex.

Its subcellular location is the virion membrane. The protein localises to the host Golgi apparatus. It localises to the host trans-Golgi network. The protein resides in the host endosome membrane. It is found in the host nucleus inner membrane. In terms of biological role, envelope glycoprotein important for virion assembly and egress. Plays a role in the correct incorporation of gH-gL into virion membrane. Directs the glycoprotein N (gN) to the host trans-Golgi network. This Human herpesvirus 2 (strain HG52) (HHV-2) protein is Envelope glycoprotein M.